Reading from the N-terminus, the 422-residue chain is Dihydroorotase (422 aa).

2 residues coordinate Zn(2+): histidine 53 and histidine 55. Residues 55-57 (HFR) and asparagine 87 contribute to the substrate site. Zn(2+)-binding residues include glutamate 138, histidine 172, histidine 223, and aspartate 291. The active site involves aspartate 291. Histidine 295 provides a ligand contact to substrate.

Belongs to the metallo-dependent hydrolases superfamily. DHOase family. Class I DHOase subfamily. It depends on Zn(2+) as a cofactor.

The catalysed reaction is (S)-dihydroorotate + H2O = N-carbamoyl-L-aspartate + H(+). It functions in the pathway pyrimidine metabolism; UMP biosynthesis via de novo pathway; (S)-dihydroorotate from bicarbonate: step 3/3. Catalyzes the reversible cyclization of carbamoyl aspartate to dihydroorotate. The chain is Dihydroorotase from Halobacterium salinarum (strain ATCC 700922 / JCM 11081 / NRC-1) (Halobacterium halobium).